A 227-amino-acid polypeptide reads, in one-letter code: Ribose-5-phosphate isomerase A (227 aa).

Substrate contacts are provided by residues 28 to 31 (TGST), 85 to 88 (DGAD), and 98 to 101 (KGGG). The active-site Proton acceptor is Glu-107. A substrate-binding site is contributed by Lys-125.

Belongs to the ribose 5-phosphate isomerase family. Homodimer.

The catalysed reaction is aldehydo-D-ribose 5-phosphate = D-ribulose 5-phosphate. It functions in the pathway carbohydrate degradation; pentose phosphate pathway; D-ribose 5-phosphate from D-ribulose 5-phosphate (non-oxidative stage): step 1/1. Its function is as follows. Catalyzes the reversible conversion of ribose-5-phosphate to ribulose 5-phosphate. This chain is Ribose-5-phosphate isomerase A, found in Limosilactobacillus reuteri (strain DSM 20016) (Lactobacillus reuteri).